The primary structure comprises 59 residues: Large ribosomal subunit protein bL32c (59 aa).

The disordered stretch occupies residues 37–59; it reads SRSFSSGNEHPKPKGFSGQQTNK.

It belongs to the bacterial ribosomal protein bL32 family.

The protein resides in the plastid. Its subcellular location is the chloroplast. This is Large ribosomal subunit protein bL32c from Hordeum vulgare (Barley).